The primary structure comprises 306 residues: [methyl-Co(III) glycine betaine-specific corrinoid protein]--tetrahydrofolate methyltransferase (306 aa).

It belongs to the MtrH family.

It carries out the reaction methyl-Co(III)-[glycine betaine-specific corrinoid protein] + (6S)-5,6,7,8-tetrahydrofolate = Co(I)-[glycine betaine-specific corrinoid protein] + (6S)-5-methyl-5,6,7,8-tetrahydrofolate + H(+). In terms of biological role, methyltransferase able to catalyze the transfer of a methyl group from methylcobalamin (methylCbl) to tetrahydrofolate (THF) in vitro, to generate methyl-THF and cob(I)alamin. In vivo, the methyl group probably comes from the adjacently encoded methylated corrinoid protein DSY3155. The methyl group may then be ultimately converted to carbon dioxide, and its oxidation would also provide reducing equivalents for anaerobic respiration. Thus, may function in the pathway that allows anaerobic methylotrophic growth of D.hafniense using glycine betaine. In Desulfitobacterium hafniense (strain Y51), this protein is [methyl-Co(III) glycine betaine-specific corrinoid protein]--tetrahydrofolate methyltransferase.